The chain runs to 182 residues: Adenine phosphoribosyltransferase (182 aa).

This sequence belongs to the purine/pyrimidine phosphoribosyltransferase family. In terms of assembly, homodimer.

The protein resides in the cytoplasm. The enzyme catalyses AMP + diphosphate = 5-phospho-alpha-D-ribose 1-diphosphate + adenine. It functions in the pathway purine metabolism; AMP biosynthesis via salvage pathway; AMP from adenine: step 1/1. In terms of biological role, catalyzes a salvage reaction resulting in the formation of AMP, that is energically less costly than de novo synthesis. The protein is Adenine phosphoribosyltransferase of Saccharopolyspora erythraea (strain ATCC 11635 / DSM 40517 / JCM 4748 / NBRC 13426 / NCIMB 8594 / NRRL 2338).